The sequence spans 270 residues: Phosphatidate cytidylyltransferase (270 aa).

7 helical membrane-spanning segments follow: residues 19 to 39 (LWLT…IGLA), 53 to 73 (TAFS…LLIL), 76 to 96 (GALL…VTQW), 101 to 121 (GWPA…SLLR), 126 to 146 (FGFT…ITAY), 183 to 203 (LVAS…ALLL), and 248 to 268 (ALLY…AIFF).

Belongs to the CDS family.

It localises to the cell inner membrane. It catalyses the reaction a 1,2-diacyl-sn-glycero-3-phosphate + CTP + H(+) = a CDP-1,2-diacyl-sn-glycerol + diphosphate. It functions in the pathway phospholipid metabolism; CDP-diacylglycerol biosynthesis; CDP-diacylglycerol from sn-glycerol 3-phosphate: step 3/3. This Brucella abortus (strain 2308) protein is Phosphatidate cytidylyltransferase (cdsA).